The following is a 316-amino-acid chain: Transcription termination/antitermination protein NusG (316 aa).

Belongs to the NusG family.

Participates in transcription elongation, termination and antitermination. The protein is Transcription termination/antitermination protein NusG of Mycoplasma genitalium (strain ATCC 33530 / DSM 19775 / NCTC 10195 / G37) (Mycoplasmoides genitalium).